Consider the following 324-residue polypeptide: D-alanine--D-alanine ligase (324 aa).

The ATP-grasp domain occupies 120-322 (NNYLRGFGVE…LKEILTEIIE (203 aa)). An ATP-binding site is contributed by 149 to 204 (IDKLGLPLIVKPNDGGSSFGVTKVTNITQIQLAIRNAFNEGEGVLIESFIPGTEIT). Mg(2+) contacts are provided by Asp276, Glu289, and Asn291.

The protein belongs to the D-alanine--D-alanine ligase family. It depends on Mg(2+) as a cofactor. Mn(2+) is required as a cofactor.

It is found in the cytoplasm. The catalysed reaction is 2 D-alanine + ATP = D-alanyl-D-alanine + ADP + phosphate + H(+). The protein operates within cell wall biogenesis; peptidoglycan biosynthesis. Its function is as follows. Cell wall formation. The polypeptide is D-alanine--D-alanine ligase (Azobacteroides pseudotrichonymphae genomovar. CFP2).